The primary structure comprises 62 residues: DNA-binding protein 7 (62 aa).

Belongs to the 7 kDa DNA-binding/endoribonuclease P2 family. In terms of assembly, monomer.

The protein resides in the cytoplasm. Can constrain negative DNA supercoils. May be involved in maintaining the integrity of the genome at high temperature. The polypeptide is DNA-binding protein 7 (Metallosphaera sedula (strain ATCC 51363 / DSM 5348 / JCM 9185 / NBRC 15509 / TH2)).